The sequence spans 133 residues: ATP synthase epsilon chain, chloroplastic (133 aa).

The protein belongs to the ATPase epsilon chain family. In terms of assembly, F-type ATPases have 2 components, CF(1) - the catalytic core - and CF(0) - the membrane proton channel. CF(1) has five subunits: alpha(3), beta(3), gamma(1), delta(1), epsilon(1). CF(0) has three main subunits: a, b and c.

It localises to the plastid. Its subcellular location is the chloroplast thylakoid membrane. Its function is as follows. Produces ATP from ADP in the presence of a proton gradient across the membrane. This chain is ATP synthase epsilon chain, chloroplastic, found in Helianthus annuus (Common sunflower).